Reading from the N-terminus, the 523-residue chain is Na(+)/H(+) antiporter NhaB (523 aa).

Helical transmembrane passes span 28–48 (FLII…WLLV), 51–71 (FIFT…GLLA), 89–109 (LSAN…IYFV), 137–157 (MAAF…VISI), 237–257 (FFIR…ATCV), 302–322 (AIIC…VGLI), 347–367 (TESL…AVII), 390–410 (LFYI…VGTV), 445–465 (VATP…LAPL), and 476–496 (MALP…MYLL).

The protein belongs to the NhaB Na(+)/H(+) (TC 2.A.34) antiporter family.

It is found in the cell inner membrane. It catalyses the reaction 2 Na(+)(in) + 3 H(+)(out) = 2 Na(+)(out) + 3 H(+)(in). In terms of biological role, na(+)/H(+) antiporter that extrudes sodium in exchange for external protons. In Tolumonas auensis (strain DSM 9187 / NBRC 110442 / TA 4), this protein is Na(+)/H(+) antiporter NhaB.